The sequence spans 241 residues: Probable phosphatase Cthe_0111 (241 aa).

Residues His8, His10, His16, His41, Glu74, His102, His132, Asp192, and His194 each coordinate Zn(2+).

It belongs to the PHP family. It depends on Zn(2+) as a cofactor.

This chain is Probable phosphatase Cthe_0111, found in Acetivibrio thermocellus (strain ATCC 27405 / DSM 1237 / JCM 9322 / NBRC 103400 / NCIMB 10682 / NRRL B-4536 / VPI 7372) (Clostridium thermocellum).